The following is a 193-amino-acid chain: Acyl carrier protein phosphodiesterase (193 aa).

It belongs to the AcpH family.

It catalyses the reaction holo-[ACP] + H2O = apo-[ACP] + (R)-4'-phosphopantetheine + H(+). Converts holo-ACP to apo-ACP by hydrolytic cleavage of the phosphopantetheine prosthetic group from ACP. The sequence is that of Acyl carrier protein phosphodiesterase from Pectobacterium atrosepticum (strain SCRI 1043 / ATCC BAA-672) (Erwinia carotovora subsp. atroseptica).